We begin with the raw amino-acid sequence, 474 residues long: Bifunctional protein HldE (474 aa).

A ribokinase region spans residues 1 to 318; that stretch reads MKLSMPRFDQ…RAIQREEGSE (318 aa). 194 to 197 serves as a coordination point for ATP; that stretch reads NLSE. Asp-263 is an active-site residue. Residues 343-474 are cytidylyltransferase; the sequence is FTNGCFDILH…AIVEKIRGQG (132 aa).

The protein in the N-terminal section; belongs to the carbohydrate kinase PfkB family. This sequence in the C-terminal section; belongs to the cytidylyltransferase family. As to quaternary structure, homodimer.

It carries out the reaction D-glycero-beta-D-manno-heptose 7-phosphate + ATP = D-glycero-beta-D-manno-heptose 1,7-bisphosphate + ADP + H(+). The enzyme catalyses D-glycero-beta-D-manno-heptose 1-phosphate + ATP + H(+) = ADP-D-glycero-beta-D-manno-heptose + diphosphate. It functions in the pathway nucleotide-sugar biosynthesis; ADP-L-glycero-beta-D-manno-heptose biosynthesis; ADP-L-glycero-beta-D-manno-heptose from D-glycero-beta-D-manno-heptose 7-phosphate: step 1/4. It participates in nucleotide-sugar biosynthesis; ADP-L-glycero-beta-D-manno-heptose biosynthesis; ADP-L-glycero-beta-D-manno-heptose from D-glycero-beta-D-manno-heptose 7-phosphate: step 3/4. Functionally, catalyzes the phosphorylation of D-glycero-D-manno-heptose 7-phosphate at the C-1 position to selectively form D-glycero-beta-D-manno-heptose-1,7-bisphosphate. Its function is as follows. Catalyzes the ADP transfer from ATP to D-glycero-beta-D-manno-heptose 1-phosphate, yielding ADP-D-glycero-beta-D-manno-heptose. This chain is Bifunctional protein HldE, found in Pseudomonas syringae pv. tomato (strain ATCC BAA-871 / DC3000).